The chain runs to 443 residues: MDAWSRSLERLEAEFPPEDVHTWLKPLQADLRVDSLVLYAPNAFIVDQVRELYLARIRELLAHFAGFSDVFLEIGSRPRPVEAQNAPVSTPSAHVSSEPQVPFAGNLDNHYTFANFVEGRSNQLGLAAAFQAAQKPGDRAHNPLLLYGGTGLGKTHLMFAAGNAMRQANPGAKVLYLRSEQFFSAMIRALQEKTMDQFKRQFQQVDALLIDDIQFFAGKDRTQEEFFHTFNALFDGKQQIILTCDRYPREVEGLEARLKSRLAWGLSVAIEPPDFETRAAIVLAKARERGAEIPDDVAFLIAKKMRSNVRDLEGALNTLTARANFTGRAITTEFAQETLRDLLRAQQQAISIPNIQKTVADYYGLQIKDLLSKRRTRSLARPRQVAMALTKELTEHSLPEIGDAFAGRDHTTVLHACRQIRTLMETDGKLREDWDKLIRKLSE.

The domain I, interacts with DnaA modulators stretch occupies residues 1 to 67 (MDAWSRSLER…RELLAHFAGF (67 aa)). Residues 67 to 105 (FSDVFLEIGSRPRPVEAQNAPVSTPSAHVSSEPQVPFAG) are domain II. The segment at 106-323 (NLDNHYTFAN…GALNTLTARA (218 aa)) is domain III, AAA+ region. ATP-binding residues include glycine 151, glycine 153, lysine 154, and threonine 155. Residues 324 to 443 (NFTGRAITTE…WDKLIRKLSE (120 aa)) form a domain IV, binds dsDNA region.

It belongs to the DnaA family. Oligomerizes as a right-handed, spiral filament on DNA at oriC.

The protein localises to the cytoplasm. Functionally, plays an essential role in the initiation and regulation of chromosomal replication. ATP-DnaA binds to the origin of replication (oriC) to initiate formation of the DNA replication initiation complex once per cell cycle. Binds the DnaA box (a 9 base pair repeat at the origin) and separates the double-stranded (ds)DNA. Forms a right-handed helical filament on oriC DNA; dsDNA binds to the exterior of the filament while single-stranded (ss)DNA is stabiized in the filament's interior. The ATP-DnaA-oriC complex binds and stabilizes one strand of the AT-rich DNA unwinding element (DUE), permitting loading of DNA polymerase. After initiation quickly degrades to an ADP-DnaA complex that is not apt for DNA replication. Binds acidic phospholipids. The protein is Chromosomal replication initiator protein DnaA of Stenotrophomonas maltophilia (strain K279a).